A 334-amino-acid polypeptide reads, in one-letter code: Glycerol-3-phosphate dehydrogenase [NAD(P)+] (334 aa).

NADPH contacts are provided by W13, R33, and K106. Sn-glycerol 3-phosphate contacts are provided by K106, G137, and S139. Position 141 (A141) interacts with NADPH. Residues K192, D245, S255, R256, and N257 each contribute to the sn-glycerol 3-phosphate site. Residue K192 is the Proton acceptor of the active site. NADPH is bound at residue R256. 2 residues coordinate NADPH: V280 and E282.

This sequence belongs to the NAD-dependent glycerol-3-phosphate dehydrogenase family.

The protein resides in the cytoplasm. The catalysed reaction is sn-glycerol 3-phosphate + NAD(+) = dihydroxyacetone phosphate + NADH + H(+). It catalyses the reaction sn-glycerol 3-phosphate + NADP(+) = dihydroxyacetone phosphate + NADPH + H(+). It participates in membrane lipid metabolism; glycerophospholipid metabolism. Catalyzes the reduction of the glycolytic intermediate dihydroxyacetone phosphate (DHAP) to sn-glycerol 3-phosphate (G3P), the key precursor for phospholipid synthesis. This Chlamydia felis (strain Fe/C-56) (Chlamydophila felis) protein is Glycerol-3-phosphate dehydrogenase [NAD(P)+].